The following is a 725-amino-acid chain: Catalase B (725 aa).

The N-terminal stretch at 1–15 (MRALSLASLIGIASA) is a signal peptide. Positions 16-27 (ACPYMTGELERR) are excised as a propeptide. The N-linked (GlcNAc...) asparagine glycan is linked to Asn50. His101 is an active-site residue. Asn119 carries an N-linked (GlcNAc...) asparagine glycan. Residue Asn174 is part of the active site. Tyr388 is a binding site for heme. N-linked (GlcNAc...) asparagine glycans are attached at residues Asn447, Asn550, and Asn645.

This sequence belongs to the catalase family. In terms of assembly, homotetramer. The cofactor is heme.

The protein resides in the secreted. It catalyses the reaction 2 H2O2 = O2 + 2 H2O. In terms of biological role, occurs in almost all aerobically respiring organisms and serves to protect cells from the toxic effects of hydrogen peroxide through its degradation into water and oxygen. The chain is Catalase B (catB) from Aspergillus oryzae (strain ATCC 42149 / RIB 40) (Yellow koji mold).